We begin with the raw amino-acid sequence, 416 residues long: 46 kDa surface antigen (416 aa).

The first 27 residues, 1 to 27 (MLRKKFLYSSAIYATSLASIIAFVAAG), serve as a signal peptide directing secretion. A lipid anchor (N-palmitoyl cysteine) is attached at Cys-28. The S-diacylglycerol cysteine moiety is linked to residue Cys-28.

The protein resides in the cell membrane. This is 46 kDa surface antigen (p46) from Mesomycoplasma hyopneumoniae (strain 232) (Mycoplasma hyopneumoniae).